A 106-amino-acid chain; its full sequence is NADH-quinone oxidoreductase subunit K (106 aa).

The next 3 helical transmembrane spans lie at 10 to 30 (IHYY…GVMV), 35 to 55 (VLIF…FVTF), and 67 to 87 (VVFF…AIVI).

The protein belongs to the complex I subunit 4L family. NDH-1 is composed of 14 different subunits. Subunits NuoA, H, J, K, L, M, N constitute the membrane sector of the complex.

The protein resides in the cell inner membrane. The catalysed reaction is a quinone + NADH + 5 H(+)(in) = a quinol + NAD(+) + 4 H(+)(out). Its function is as follows. NDH-1 shuttles electrons from NADH, via FMN and iron-sulfur (Fe-S) centers, to quinones in the respiratory chain. The immediate electron acceptor for the enzyme in this species is believed to be ubiquinone. Couples the redox reaction to proton translocation (for every two electrons transferred, four hydrogen ions are translocated across the cytoplasmic membrane), and thus conserves the redox energy in a proton gradient. This is NADH-quinone oxidoreductase subunit K from Leptospira interrogans serogroup Icterohaemorrhagiae serovar copenhageni (strain Fiocruz L1-130).